A 170-amino-acid chain; its full sequence is Adenine phosphoribosyltransferase (170 aa).

Belongs to the purine/pyrimidine phosphoribosyltransferase family. As to quaternary structure, homodimer.

Its subcellular location is the cytoplasm. It carries out the reaction AMP + diphosphate = 5-phospho-alpha-D-ribose 1-diphosphate + adenine. Its pathway is purine metabolism; AMP biosynthesis via salvage pathway; AMP from adenine: step 1/1. In terms of biological role, catalyzes a salvage reaction resulting in the formation of AMP, that is energically less costly than de novo synthesis. The protein is Adenine phosphoribosyltransferase of Prochlorococcus marinus (strain AS9601).